A 57-amino-acid chain; its full sequence is Small polypeptide DEVIL 20 (57 aa).

An N-linked (GlcNAc...) asparagine glycan is attached at N5. The segment at 16–47 (TFKAKCSHMVRKQRAKFYILGRCLAMLVCGRG) is required for DVL/RTFL small polypeptide activity. The helical transmembrane segment at 29–45 (RAKFYILGRCLAMLVCG) threads the bilayer.

It belongs to the DVL/RTFL small polypeptides family.

It localises to the cell membrane. Functionally, small polypeptide acting as a regulatory molecule which coordinates cellular responses required for differentiation, growth and development, probably by restricting polar cell proliferation in lateral organs and coordinating socket cell recruitment and differentiation at trichome sites. The polypeptide is Small polypeptide DEVIL 20 (Arabidopsis thaliana (Mouse-ear cress)).